Here is a 157-residue protein sequence, read N- to C-terminus: GTP-dependent dephospho-CoA kinase (157 aa).

GTP-binding residues include aspartate 40, aspartate 59, lysine 61, glutamate 107, and aspartate 128.

This sequence belongs to the GTP-dependent DPCK family.

The catalysed reaction is 3'-dephospho-CoA + GTP = GDP + CoA + H(+). It participates in cofactor biosynthesis; coenzyme A biosynthesis. In terms of biological role, catalyzes the GTP-dependent phosphorylation of the 3'-hydroxyl group of dephosphocoenzyme A to form coenzyme A (CoA). This Desulfurococcus amylolyticus (strain DSM 18924 / JCM 16383 / VKM B-2413 / 1221n) (Desulfurococcus kamchatkensis) protein is GTP-dependent dephospho-CoA kinase.